We begin with the raw amino-acid sequence, 947 residues long: Valine--tRNA ligase (947 aa).

A 'HIGH' region motif is present at residues 45–55 (PNVTGSLHMGH). The short motif at 591 to 595 (KMSKS) is the 'KMSKS' region element. An ATP-binding site is contributed by Lys594. The stretch at 879–943 (DLAAEQARLE…ASLRTALTRV (65 aa)) forms a coiled coil.

The protein belongs to the class-I aminoacyl-tRNA synthetase family. ValS type 1 subfamily. Monomer.

It is found in the cytoplasm. The catalysed reaction is tRNA(Val) + L-valine + ATP = L-valyl-tRNA(Val) + AMP + diphosphate. Functionally, catalyzes the attachment of valine to tRNA(Val). As ValRS can inadvertently accommodate and process structurally similar amino acids such as threonine, to avoid such errors, it has a 'posttransfer' editing activity that hydrolyzes mischarged Thr-tRNA(Val) in a tRNA-dependent manner. The sequence is that of Valine--tRNA ligase from Agrobacterium fabrum (strain C58 / ATCC 33970) (Agrobacterium tumefaciens (strain C58)).